Here is a 759-residue protein sequence, read N- to C-terminus: LPS-assembly protein LptD (759 aa).

Positions 1 to 22 (MPLPIPRLLIPALLLASGASLA) are cleaved as a signal peptide.

The protein belongs to the LptD family. As to quaternary structure, component of the lipopolysaccharide transport and assembly complex. Interacts with LptE and LptA.

It localises to the cell outer membrane. Together with LptE, is involved in the assembly of lipopolysaccharide (LPS) at the surface of the outer membrane. The protein is LPS-assembly protein LptD of Alcanivorax borkumensis (strain ATCC 700651 / DSM 11573 / NCIMB 13689 / SK2).